A 174-amino-acid chain; its full sequence is RNA pyrophosphohydrolase (174 aa).

One can recognise a Nudix hydrolase domain in the interval 6 to 149; it reads GYRPNVGIIL…KRDVYLEALK (144 aa). The short motif at 38–59 is the Nudix box element; the sequence is GGIKPGESPETAMYRELYEEVG.

Belongs to the Nudix hydrolase family. RppH subfamily. A divalent metal cation serves as cofactor.

In terms of biological role, accelerates the degradation of transcripts by removing pyrophosphate from the 5'-end of triphosphorylated RNA, leading to a more labile monophosphorylated state that can stimulate subsequent ribonuclease cleavage. In Neisseria gonorrhoeae (strain ATCC 700825 / FA 1090), this protein is RNA pyrophosphohydrolase.